A 247-amino-acid chain; its full sequence is Carboxy-S-adenosyl-L-methionine synthase (247 aa).

Residues tyrosine 39, 64-66, 89-90, 117-118, asparagine 132, and arginine 199 each bind S-adenosyl-L-methionine; these read GCS, DN, and DI.

It belongs to the class I-like SAM-binding methyltransferase superfamily. Cx-SAM synthase family. In terms of assembly, homodimer.

It catalyses the reaction prephenate + S-adenosyl-L-methionine = carboxy-S-adenosyl-L-methionine + 3-phenylpyruvate + H2O. Catalyzes the conversion of S-adenosyl-L-methionine (SAM) to carboxy-S-adenosyl-L-methionine (Cx-SAM). The chain is Carboxy-S-adenosyl-L-methionine synthase from Shigella sonnei (strain Ss046).